A 119-amino-acid chain; its full sequence is Holo-[acyl-carrier-protein] synthase (119 aa).

2 residues coordinate Mg(2+): D8 and E59.

This sequence belongs to the P-Pant transferase superfamily. AcpS family. The cofactor is Mg(2+).

The protein localises to the cytoplasm. It carries out the reaction apo-[ACP] + CoA = holo-[ACP] + adenosine 3',5'-bisphosphate + H(+). Transfers the 4'-phosphopantetheine moiety from coenzyme A to a Ser of acyl-carrier-protein. In Lactococcus lactis subsp. lactis (strain IL1403) (Streptococcus lactis), this protein is Holo-[acyl-carrier-protein] synthase.